Here is a 157-residue protein sequence, read N- to C-terminus: Transcription elongation factor GreA (157 aa).

Residues 46-67 adopt a coiled-coil conformation; it reads AEYHAARERQSFIEGRIKELED.

This sequence belongs to the GreA/GreB family.

Necessary for efficient RNA polymerase transcription elongation past template-encoded arresting sites. The arresting sites in DNA have the property of trapping a certain fraction of elongating RNA polymerases that pass through, resulting in locked ternary complexes. Cleavage of the nascent transcript by cleavage factors such as GreA or GreB allows the resumption of elongation from the new 3'terminus. GreA releases sequences of 2 to 3 nucleotides. In Rhodospirillum rubrum (strain ATCC 11170 / ATH 1.1.1 / DSM 467 / LMG 4362 / NCIMB 8255 / S1), this protein is Transcription elongation factor GreA.